The primary structure comprises 156 residues: Small ribosomal subunit protein uS7 (156 aa).

This sequence belongs to the universal ribosomal protein uS7 family. As to quaternary structure, part of the 30S ribosomal subunit. Contacts proteins S9 and S11.

Functionally, one of the primary rRNA binding proteins, it binds directly to 16S rRNA where it nucleates assembly of the head domain of the 30S subunit. Is located at the subunit interface close to the decoding center, probably blocks exit of the E-site tRNA. In Nitratidesulfovibrio vulgaris (strain DSM 19637 / Miyazaki F) (Desulfovibrio vulgaris), this protein is Small ribosomal subunit protein uS7.